Reading from the N-terminus, the 628-residue chain is (+)-alpha pinene synthase 1, chloroplastic (628 aa).

Residues Asp-379, Asp-383, and Asp-531 each contribute to the Mg(2+) site. A DDXXD motif motif is present at residues 379–383; the sequence is DDIYD.

Belongs to the terpene synthase family. Tpsd subfamily. Mg(2+) is required as a cofactor. The cofactor is Mn(2+).

Its subcellular location is the plastid. It localises to the chloroplast. It catalyses the reaction (2E)-geranyl diphosphate = (1R,5R)-alpha-pinene + diphosphate. The protein operates within terpene metabolism; oleoresin biosynthesis. It participates in secondary metabolite biosynthesis; terpenoid biosynthesis. Its function is as follows. Monoterpene synthase (TPS) involved in the biosynthesis of monoterpene natural products included in conifer oleoresin secretions and volatile emissions; these compounds contribute to biotic and abiotic stress defense against herbivores and pathogens. Catalyzes the conversion of (2E)-geranyl diphosphate (GPP) to (+)-alpha-pinene. The protein is (+)-alpha pinene synthase 1, chloroplastic of Pinus contorta (Shore pine).